A 252-amino-acid chain; its full sequence is Triosephosphate isomerase (252 aa).

Residue Asn9–Lys11 participates in substrate binding. Catalysis depends on His96, which acts as the Electrophile. Glu166 serves as the catalytic Proton acceptor. Substrate is bound by residues Gly172, Ser212, and Gly233–Gly234.

It belongs to the triosephosphate isomerase family. Homodimer.

The protein resides in the cytoplasm. The enzyme catalyses D-glyceraldehyde 3-phosphate = dihydroxyacetone phosphate. It participates in carbohydrate biosynthesis; gluconeogenesis. The protein operates within carbohydrate degradation; glycolysis; D-glyceraldehyde 3-phosphate from glycerone phosphate: step 1/1. Functionally, involved in the gluconeogenesis. Catalyzes stereospecifically the conversion of dihydroxyacetone phosphate (DHAP) to D-glyceraldehyde-3-phosphate (G3P). The chain is Triosephosphate isomerase from Prosthecochloris aestuarii (strain DSM 271 / SK 413).